Here is a 428-residue protein sequence, read N- to C-terminus: Adenylosuccinate synthetase (428 aa).

GTP contacts are provided by residues 12-18 and 40-42; these read GDEGKGK and GHT. Catalysis depends on D13, which acts as the Proton acceptor. 2 residues coordinate Mg(2+): D13 and G40. IMP contacts are provided by residues 13 to 16, 38 to 41, T128, R142, Q223, T238, and R302; these read DEGK and NAGH. Catalysis depends on H41, which acts as the Proton donor. Substrate is bound at residue 298–304; it reads TTTGRPR. Residues R304, 330–332, and 412–414 contribute to the GTP site; these read KLD and SVG.

This sequence belongs to the adenylosuccinate synthetase family. In terms of assembly, homodimer. The cofactor is Mg(2+).

It localises to the cytoplasm. It carries out the reaction IMP + L-aspartate + GTP = N(6)-(1,2-dicarboxyethyl)-AMP + GDP + phosphate + 2 H(+). Its pathway is purine metabolism; AMP biosynthesis via de novo pathway; AMP from IMP: step 1/2. Plays an important role in the de novo pathway of purine nucleotide biosynthesis. Catalyzes the first committed step in the biosynthesis of AMP from IMP. The protein is Adenylosuccinate synthetase of Brevibacillus brevis (strain 47 / JCM 6285 / NBRC 100599).